Here is a 104-residue protein sequence, read N- to C-terminus: Large ribosomal subunit protein bL21 (104 aa).

Belongs to the bacterial ribosomal protein bL21 family. As to quaternary structure, part of the 50S ribosomal subunit. Contacts protein L20.

In terms of biological role, this protein binds to 23S rRNA in the presence of protein L20. The protein is Large ribosomal subunit protein bL21 of Clostridium botulinum (strain Kyoto / Type A2).